We begin with the raw amino-acid sequence, 223 residues long: Ubiquitin carboxyl-terminal hydrolase isozyme L1 (223 aa).

N-acetylmethionine is present on Met-1. A UCH catalytic domain is found at 2 to 221 (QLKPMEINPE…VRFSAVALCK (220 aa)). The interaction with ubiquitin stretch occupies residues 5-10 (PMEINP). Catalysis depends on Cys-90, which acts as the Nucleophile. A Phosphoserine modification is found at Ser-125. His-161 serves as the catalytic Proton donor. Residues 211–216 (EVRFSA) are interaction with ubiquitin. Cys-220 is lipidated: S-farnesyl cysteine. A propeptide spans 221–223 (KAA) (removed in mature form).

The protein belongs to the peptidase C12 family. In terms of assembly, monomer. Homodimer. Interacts with COPS5 and SNCA. In terms of processing, O-glycosylated.

It is found in the cytoplasm. Its subcellular location is the endoplasmic reticulum membrane. The enzyme catalyses Thiol-dependent hydrolysis of ester, thioester, amide, peptide and isopeptide bonds formed by the C-terminal Gly of ubiquitin (a 76-residue protein attached to proteins as an intracellular targeting signal).. Its function is as follows. Ubiquitin-protein hydrolase involved both in the processing of ubiquitin precursors and of ubiquitinated proteins. This enzyme is a thiol protease that recognizes and hydrolyzes a peptide bond at the C-terminal glycine of ubiquitin. Also binds to free monoubiquitin and may prevent its degradation in lysosomes. The homodimer may have ATP-independent ubiquitin ligase activity. This Sus scrofa (Pig) protein is Ubiquitin carboxyl-terminal hydrolase isozyme L1 (UCHL1).